Consider the following 89-residue polypeptide: Small ribosomal subunit protein uS15 (89 aa).

This sequence belongs to the universal ribosomal protein uS15 family. As to quaternary structure, part of the 30S ribosomal subunit. Forms a bridge to the 50S subunit in the 70S ribosome, contacting the 23S rRNA.

Its function is as follows. One of the primary rRNA binding proteins, it binds directly to 16S rRNA where it helps nucleate assembly of the platform of the 30S subunit by binding and bridging several RNA helices of the 16S rRNA. Functionally, forms an intersubunit bridge (bridge B4) with the 23S rRNA of the 50S subunit in the ribosome. The polypeptide is Small ribosomal subunit protein uS15 (Janthinobacterium sp. (strain Marseille) (Minibacterium massiliensis)).